Here is a 193-residue protein sequence, read N- to C-terminus: 3-isopropylmalate dehydratase small subunit (193 aa).

The protein belongs to the LeuD family. LeuD type 1 subfamily. In terms of assembly, heterodimer of LeuC and LeuD.

It catalyses the reaction (2R,3S)-3-isopropylmalate = (2S)-2-isopropylmalate. It functions in the pathway amino-acid biosynthesis; L-leucine biosynthesis; L-leucine from 3-methyl-2-oxobutanoate: step 2/4. Its function is as follows. Catalyzes the isomerization between 2-isopropylmalate and 3-isopropylmalate, via the formation of 2-isopropylmaleate. The protein is 3-isopropylmalate dehydratase small subunit of Listeria monocytogenes serovar 1/2a (strain ATCC BAA-679 / EGD-e).